A 130-amino-acid chain; its full sequence is Fumarate reductase subunit C (130 aa).

Helical transmembrane passes span 33-53 (AVTT…LKGG), 60-80 (FVTF…LLGA), and 109-129 (VIKL…GIAL).

Belongs to the FrdC family. In terms of assembly, part of an enzyme complex containing four subunits: a flavoprotein (FrdA), an iron-sulfur protein (FrdB), and two hydrophobic anchor proteins (FrdC and FrdD).

Its subcellular location is the cell inner membrane. Two distinct, membrane-bound, FAD-containing enzymes are responsible for the catalysis of fumarate and succinate interconversion; fumarate reductase is used in anaerobic growth, and succinate dehydrogenase is used in aerobic growth. Anchors the catalytic components of the fumarate reductase complex to the cell inner membrane, binds quinones. This is Fumarate reductase subunit C from Photorhabdus laumondii subsp. laumondii (strain DSM 15139 / CIP 105565 / TT01) (Photorhabdus luminescens subsp. laumondii).